The following is a 245-amino-acid chain: Ninjurin-A (245 aa).

At 1–170 (MSNLEHITLE…TSSQHPYFYP (170 aa)) the chain is on the extracellular side. 2 N-linked (GlcNAc...) asparagine glycosylation sites follow: N19 and N28. The interval 32-101 (HSYGGAIDGR…NVNVNVPNGG (70 aa)) is disordered. Residues 92–101 (NVNVNVPNGG) are compositionally biased toward low complexity. The tract at residues 135-146 (KKTLAQGMMDLA) is helix alpha1. The segment at 149–165 (SANANQLRYVLETSSQH) is helix alpha2. Residues 171–191 (SLLFISLSIIFQIAVGVGLIL) form a helical membrane-spanning segment. Residues 192–211 (NGQYNIKNGHDICRANRINN) are Cytoplasmic-facing. Residues 212 to 232 (YTVSGIFIVTVVNVLISAFTV) form a helical membrane-spanning segment. Residues 233 to 245 (DRDTVPALPANTT) are Extracellular-facing.

This sequence belongs to the ninjurin family. Homooligomer. In terms of processing, cleaved by Mmp1 protease to generate the Secreted ninjurin-A form.

Its subcellular location is the cell membrane. It is found in the secreted. Functionally, effector of non-apoptotic necrotic cell death that mediates plasma membrane rupture (cytolysis): oligomerizes in response to death stimuli and promotes plasma membrane rupture by introducing hydrophilic faces of 2 alpha helices into the hydrophobic membrane, leading to release intracellular molecules that propagate the inflammatory response. Also acts as a homophilic transmembrane adhesion molecule that promotes cell adhesion by mediating homophilic interactions via its extracellular region. Secreted form generated by cleavage, which acts as a negative regulator of cell adhesion. Promotes the loss of cell adhesion in a cell non-autonomous manner. The protein is Ninjurin-A of Drosophila melanogaster (Fruit fly).